Here is a 236-residue protein sequence, read N- to C-terminus: DNA repair protein RecO (236 aa).

It belongs to the RecO family.

In terms of biological role, involved in DNA repair and RecF pathway recombination. In Haemophilus influenzae (strain 86-028NP), this protein is DNA repair protein RecO.